The following is a 212-amino-acid chain: Large ribosomal subunit protein uL3 (212 aa).

Residues 131–155 (RGNMTHGSKNHRLPGSTGAGTTPGR) form a disordered region.

The protein belongs to the universal ribosomal protein uL3 family. Part of the 50S ribosomal subunit. Forms a cluster with proteins L14 and L19.

Functionally, one of the primary rRNA binding proteins, it binds directly near the 3'-end of the 23S rRNA, where it nucleates assembly of the 50S subunit. This is Large ribosomal subunit protein uL3 from Microcystis aeruginosa (strain NIES-843 / IAM M-2473).